The primary structure comprises 417 residues: Serine/threonine-protein phosphatase 4 regulatory subunit 2 (417 aa).

Composition is skewed to polar residues over residues 140-149 (EKNNSSSLNR), 158-170 (NSPS…NING), and 186-196 (APMTTNGLPES). The interval 140–417 (EKNNSSSLNR…EVTDEPMEQD (278 aa)) is disordered. Residue S159 is modified to Phosphoserine. A compositionally biased stretch (basic and acidic residues) spans 197–213 (TDSKEANLQQNEEKSHS). Residues 214 to 226 (DSSTSESEVSSVS) show a composition bias toward low complexity. A Phosphoserine modification is found at S226. The span at 231–258 (KHPDEDAVEAEGHEVKRLRFDKEGEVRE) shows a compositional bias: basic and acidic residues. Residues 259 to 269 (TASQTTSSEIS) are compositionally biased toward polar residues. Over residues 283 to 297 (QDKDKDSRCTRQHCT) the composition is skewed to basic and acidic residues. The span at 298 to 311 (EEDEEEDEEEEEES) shows a compositional bias: acidic residues. Positions 318–327 (MIPERKNQEK) are enriched in basic and acidic residues. The span at 338–350 (ETSEENNQMEESD) shows a compositional bias: acidic residues. A compositionally biased stretch (basic and acidic residues) spans 353 to 363 (QAEKDLLHSEG). Residues 385 to 399 (GSNSSKTGEILSESS) show a composition bias toward polar residues. A compositionally biased stretch (acidic residues) spans 400–417 (MENDDEATEVTDEPMEQD).

Belongs to the PPP4R2 family. As to quaternary structure, serine/threonine-protein phosphatase 4 (PP4) occurs in different assemblies of the catalytic and one or more regulatory subunits. Component of the PP4 complexes PPP4C-PPP4R2, PPP4C-PPP4R2-PPP4R3A and PPP4C-PPP4R2-PPP4R3B. The PPP4C-PPP4R2 complex appears to be a tetramer composed of 2 molecules of PPP4C and 2 molecules of PPP4R2. Interacts with DDX20/GEMIN3 and GEMIN4. Interacts with RPA2; this DNA damage-dependent interaction recruits PPP4C leading to RPA2 dephosphorylation.

The protein localises to the cytoplasm. Its subcellular location is the cytoskeleton. It localises to the microtubule organizing center. The protein resides in the centrosome. It is found in the nucleus. Its function is as follows. Regulatory subunit of serine/threonine-protein phosphatase 4 (PP4). May regulate the activity of PPP4C at centrosomal microtubule organizing centers. Its interaction with the SMN complex leads to enhance the temporal localization of snRNPs, suggesting a role of PPP4C in maturation of spliceosomal snRNPs. The PPP4C-PPP4R2-PPP4R3A PP4 complex specifically dephosphorylates H2AX phosphorylated on 'Ser-140' (gamma-H2AX) generated during DNA replication and required for DNA double strand break repair. Mediates RPA2 dephosphorylation by recruiting PPP4C to RPA2 in a DNA damage-dependent manner. RPA2 dephosphorylation is required for the efficient RPA2-mediated recruitment of RAD51 to chromatin following double strand breaks, an essential step for DNA repair. The chain is Serine/threonine-protein phosphatase 4 regulatory subunit 2 (PPP4R2) from Pongo abelii (Sumatran orangutan).